The primary structure comprises 315 residues: Putative peptide transport system permease protein BMEII0209 (315 aa).

The next 6 helical transmembrane spans lie at 13–33 (AIPV…LLPG), 102–122 (LALL…VVAA), 136–156 (LALL…VILF), 178–198 (WLRS…GYLA), 238–258 (VSVL…SVVI), and 287–307 (MLFL…LYTI). The ABC transmembrane type-1 domain maps to 96 to 305 (LPVTISLALL…AINVLVDILY (210 aa)).

Belongs to the binding-protein-dependent transport system permease family. The complex is composed of two ATP-binding proteins (BMEII0205 and BMEII0206), two transmembrane proteins (BMEII0207/BMEII0208 and BMEII0209) and a solute-binding protein (BMEII0210).

The protein resides in the cell inner membrane. In terms of biological role, probably part of an ABC transporter complex that could be involved in peptide import. Probably responsible for the translocation of the substrate across the membrane. This is Putative peptide transport system permease protein BMEII0209 from Brucella melitensis biotype 1 (strain ATCC 23456 / CCUG 17765 / NCTC 10094 / 16M).